Consider the following 294-residue polypeptide: Epimerase family protein SDR39U1 (294 aa).

NADP(+)-binding positions include 31–32 (SR), 58–59 (LA), Glu77, Arg82, and Val160.

The protein belongs to the NAD(P)-dependent epimerase/dehydratase family. SDR39U1 subfamily.

Its function is as follows. Putative NADP-dependent oxidoreductase. This Bos taurus (Bovine) protein is Epimerase family protein SDR39U1 (SDR39U1).